Here is a 125-residue protein sequence, read N- to C-terminus: uncharacterized protein (125 aa).

The protein belongs to the asfivirus B125R family.

This is an uncharacterized protein from African swine fever virus (isolate Pig/Kenya/KEN-50/1950) (ASFV).